The sequence spans 152 residues: Xanthine-guanine phosphoribosyltransferase (152 aa).

Residues 37 to 38 (RG), arginine 69, and 88 to 96 (DDLVDTGGT) each bind 5-phospho-alpha-D-ribose 1-diphosphate. Arginine 69 serves as a coordination point for GMP. Residue aspartate 89 participates in Mg(2+) binding. Positions 92 and 135 each coordinate guanine. Residues aspartate 92 and isoleucine 135 each contribute to the xanthine site. GMP is bound by residues 92–96 (DTGGT) and 134–135 (WI).

Belongs to the purine/pyrimidine phosphoribosyltransferase family. XGPT subfamily. As to quaternary structure, homotetramer. Mg(2+) serves as cofactor.

It localises to the cell inner membrane. The catalysed reaction is GMP + diphosphate = guanine + 5-phospho-alpha-D-ribose 1-diphosphate. It catalyses the reaction XMP + diphosphate = xanthine + 5-phospho-alpha-D-ribose 1-diphosphate. The enzyme catalyses IMP + diphosphate = hypoxanthine + 5-phospho-alpha-D-ribose 1-diphosphate. It functions in the pathway purine metabolism; GMP biosynthesis via salvage pathway; GMP from guanine: step 1/1. Its pathway is purine metabolism; XMP biosynthesis via salvage pathway; XMP from xanthine: step 1/1. In terms of biological role, purine salvage pathway enzyme that catalyzes the transfer of the ribosyl-5-phosphate group from 5-phospho-alpha-D-ribose 1-diphosphate (PRPP) to the N9 position of the 6-oxopurines guanine and xanthine to form the corresponding ribonucleotides GMP (guanosine 5'-monophosphate) and XMP (xanthosine 5'-monophosphate), with the release of PPi. To a lesser extent, also acts on hypoxanthine. This is Xanthine-guanine phosphoribosyltransferase from Escherichia coli O127:H6 (strain E2348/69 / EPEC).